A 509-amino-acid polypeptide reads, in one-letter code: tRNA-2-methylthio-N(6)-dimethylallyladenosine synthase (509 aa).

Positions 1-20 are disordered; it reads MNEKQKQESGQVNPADKTSE. In terms of domain architecture, MTTase N-terminal spans 66–184; the sequence is RKFYIRTYGC…LPELLSEAYL (119 aa). [4Fe-4S] cluster is bound by residues cysteine 75, cysteine 111, cysteine 145, cysteine 221, cysteine 225, and cysteine 228. A Radical SAM core domain is found at 207–437; sequence RNGKIKGWVN…NDLVKEISAK (231 aa). The 64-residue stretch at 440–503 folds into the TRAM domain; it reads KEYEGRTVEV…TWSLDGVMAG (64 aa).

The protein belongs to the methylthiotransferase family. MiaB subfamily. In terms of assembly, monomer. [4Fe-4S] cluster serves as cofactor.

It localises to the cytoplasm. The catalysed reaction is N(6)-dimethylallyladenosine(37) in tRNA + (sulfur carrier)-SH + AH2 + 2 S-adenosyl-L-methionine = 2-methylsulfanyl-N(6)-dimethylallyladenosine(37) in tRNA + (sulfur carrier)-H + 5'-deoxyadenosine + L-methionine + A + S-adenosyl-L-homocysteine + 2 H(+). Functionally, catalyzes the methylthiolation of N6-(dimethylallyl)adenosine (i(6)A), leading to the formation of 2-methylthio-N6-(dimethylallyl)adenosine (ms(2)i(6)A) at position 37 in tRNAs that read codons beginning with uridine. This Bacillus velezensis (strain DSM 23117 / BGSC 10A6 / LMG 26770 / FZB42) (Bacillus amyloliquefaciens subsp. plantarum) protein is tRNA-2-methylthio-N(6)-dimethylallyladenosine synthase.